The chain runs to 225 residues: Methylthioribulose-1-phosphate dehydratase (225 aa).

His106 and His108 together coordinate Zn(2+).

This sequence belongs to the aldolase class II family. MtnB subfamily. The cofactor is Zn(2+).

It catalyses the reaction 5-(methylsulfanyl)-D-ribulose 1-phosphate = 5-methylsulfanyl-2,3-dioxopentyl phosphate + H2O. The protein operates within amino-acid biosynthesis; L-methionine biosynthesis via salvage pathway; L-methionine from S-methyl-5-thio-alpha-D-ribose 1-phosphate: step 2/6. Functionally, catalyzes the dehydration of methylthioribulose-1-phosphate (MTRu-1-P) into 2,3-diketo-5-methylthiopentyl-1-phosphate (DK-MTP-1-P). This chain is Methylthioribulose-1-phosphate dehydratase, found in Xanthomonas oryzae pv. oryzae (strain PXO99A).